Reading from the N-terminus, the 1755-residue chain is MESQQLSQHSPISHGSACASVTSKEVHTNQDPLDVSASKTEECEKASTKANSQQTTTPASSAVPENPHHASPQTAQSHSPQNGPYPQQCMMTQNQANPSGWSFYGHPSMIPYTPYQMSPMYFPPGPQSQFPQYPSSVGTPLSTPSPESGNTFTDSSSADSDMTSTKKYVRPPPMLTSPNDFPNWVKTYIKFLQNSNLGGIIPTVNGKPVRQITDDELTFLYNTFQIFAPSQFLPTWVKDILSVDYTDIMKILSKSIEKMQSDTQEANDIVTLANLQYNGSTPADAFETKVTNIIDRLNNNGIHINNKVACQLIMRGLSGEYKFLRYTRHRHLNMTVAELFLDIHAIYEEQQGSRNSKPNYRRNPSDEKNDSRSYTNTTKPKVIARNPQKTNNSKSKTARAHNVSTSNNSPSTDNDSISKSTTEPIQLNNKHDLHLGQKLTESTVNHTNHSDDELPGHLLLDSGASRTLIRSAHHIHSASSNPDINVVDAQKRNIPINAIGDLQFHFQDNTKTSIKVLHTPNIAYDLLSLNELAAVDITACFTKNVLERSDGTVLAPIVKYGDFYWVSKKYLLPSNISVPTINNVHTSESTRKYPYPFIHRMLAHANAQTIRYSLKNNTITYFNESDVDWSSAIDYQCPDCLIGKSTKHRHIKGSRLKYQNSYEPFQYLHTDIFGPVHNLPKSAPSYFISFTDETTKFRWVYPLHDRREDSILDVFTTILAFIKNQFQASVLVIQMDRGSEYTNRTLHKFLEKNGITPCYTTTADSRAHGVAERLNRTLLDDCRTQLQCSGLPNHLWFSAIEFSTIVRNSLASPKSKKSARQHAGLAGLDISTLLPFGQPVIVNDHNPNSKIHPRGIPGYALHPSRNSYGYIIYLPSLKKTVDTTNYVILQGKESRLDQFNYDALTFDEDLNRLTASYHSFIASNEIQESNDLNIESDHDFQSDIELHPEQPRNVLSKAVSPTDSTPPSTHTEDSKRVSKTNIRAPREVDPNISESNILPSKKRSSTPQISNIESTGSGGMHKLNVPLLAPMSQSNTHESSHASKSKDFRHSDSYSENETNHTNVPISSTGGTNNKTVPQISDQETEKRIIHRSPSIDASPPENNSSHNIVPIKTPTTVSEQNTEESIIADLPLPDLPPESPTEFPDPFKELPPINSHQTNSSLGGIGDSNAYTTINSKKRSLEDNETEIKVSRDTWNTKNMRSLEPPRSKKRIHLIAAVKAVKSIKPIRTTLRYDEAITYNKDIKEKEKYIEAYHKEVNQLLKMNTWDTDKYYDRKEIDPKRVINSMFIFNKKRDGTHKARFVARGDIQHPDTYDTGMQSNTVHHYALMTSLSLALDNNYYITQLDISSAYLYADIKEELYIRPPPHLGMNDKLIRLKKSHYGLKQSGANWYETIKSYLIKQCGMEEVRGWSCVFKNSQVTICLFVDDMILFSKDLNANKKIITTLKKQYDTKIINLGESDNEIQYDILGLEIKYQRGKYMKLGMENSLTEKIPKLNVPLNPKGRKLSAPGQPGLYIDQDELEIDEDEYKEKVHEMQKLIGLASYVGYKFRFDLLYYINTLAQHILFPSRQVLDMTYELIQFMWDTRDKQLIWHKNKPTEPDNKLVAISDASYGNQPYYKSQIGNIFLLNGKVIGGKSTKASLTCTSTTEAEIHAVSEAIPLLNNLSHLVQELNKKPIIKGLLTDSRSTISIIKSTNEEKFRNRFFGTKAMRLRDEVSGNNLYVYYIETKKNIADVMTKPLPIKTFKLLTNKWIH.

Polar residues-rich tracts occupy residues 1 to 23, 48 to 60, 71 to 93, and 127 to 152; these read MESQQLSQHSPISHGSACASVTS, TKANSQQTTTPAS, SPQTAQSHSPQNGPYPQQCMMTQ, and QSQFPQYPSSVGTPLSTPSPESGNTF. Disordered regions lie at residues 1–93, 126–173, and 352–421; these read MESQ…MMTQ, PQSQ…RPPP, and GSRN…SKST. Positions 153–165 are enriched in low complexity; it reads TDSSSADSDMTST. Residues 299-401 form an RNA-binding region; sequence NNGIHINNKV…NSKSKTARAH (103 aa). Residues 402 to 418 show a composition bias toward low complexity; it reads NVSTSNNSPSTDNDSIS. Serine 416 carries the post-translational modification Phosphoserine. Aspartate 461 serves as the catalytic For protease activity; shared with dimeric partner. The segment at 583–640 is integrase-type zinc finger-like; the sequence is NVHTSESTRKYPYPFIHRMLAHANAQTIRYSLKNNTITYFNESDVDWSSAIDYQCPDC. The region spanning 660-835 is the Integrase catalytic domain; that stretch reads NSYEPFQYLH…AGLDISTLLP (176 aa). 2 residues coordinate Mg(2+): aspartate 671 and aspartate 736. Disordered regions lie at residues 956-1087, 1092-1111, and 1130-1187; these read SKAV…ETEK, RSPSIDASPPENNSSHNIVP, and DLPL…DNET. Residues 960–969 are compositionally biased toward low complexity; that stretch reads SPTDSTPPST. Residues 1005–1015 are compositionally biased toward polar residues; sequence STPQISNIEST. Basic and acidic residues predominate over residues 1038–1053; it reads ESSHASKSKDFRHSDS. Composition is skewed to polar residues over residues 1054-1082 and 1101-1111; these read YSENETNHTNVPISSTGGTNNKTVPQISD and PENNSSHNIVP. The Bipartite nuclear localization signal motif lies at 1178-1212; that stretch reads KKRSLEDNETEIKVSRDTWNTKNMRSLEPPRSKKR. The Reverse transcriptase Ty1/copia-type domain occupies 1338–1476; it reads NNYYITQLDI…DILGLEIKYQ (139 aa). The Mg(2+) site is built by aspartate 1346, aspartate 1427, aspartate 1428, aspartate 1610, glutamate 1652, and aspartate 1685. Residues 1610 to 1752 enclose the RNase H Ty1/copia-type domain; it reads DASYGNQPYY…IKTFKLLTNK (143 aa).

The capsid protein forms a homotrimer, from which the VLPs are assembled. The protease is a homodimer, whose active site consists of two apposed aspartic acid residues. In terms of processing, initially, virus-like particles (VLPs) are composed of the structural unprocessed proteins Gag and Gag-Pol, and also contain the host initiator methionine tRNA (tRNA(i)-Met) which serves as a primer for minus-strand DNA synthesis, and a dimer of genomic Ty RNA. Processing of the polyproteins occurs within the particle and proceeds by an ordered pathway, called maturation. First, the protease (PR) is released by autocatalytic cleavage of the Gag-Pol polyprotein yielding capsid protein p45 and a Pol-p154 precursor protein. This cleavage is a prerequisite for subsequent processing of Pol-p154 at the remaining sites to release the mature structural and catalytic proteins. Maturation takes place prior to the RT reaction and is required to produce transposition-competent VLPs.

The protein localises to the cytoplasm. Its subcellular location is the nucleus. It carries out the reaction DNA(n) + a 2'-deoxyribonucleoside 5'-triphosphate = DNA(n+1) + diphosphate. The catalysed reaction is Endonucleolytic cleavage to 5'-phosphomonoester.. In terms of biological role, capsid protein (CA) is the structural component of the virus-like particle (VLP), forming the shell that encapsulates the retrotransposons dimeric RNA genome. The particles are assembled from trimer-clustered units and there are holes in the capsid shells that allow for the diffusion of macromolecules. CA also has nucleocapsid-like chaperone activity, promoting primer tRNA(i)-Met annealing to the multipartite primer-binding site (PBS), dimerization of Ty1 RNA and initiation of reverse transcription. Functionally, the aspartyl protease (PR) mediates the proteolytic cleavages of the Gag and Gag-Pol polyproteins after assembly of the VLP. Its function is as follows. Reverse transcriptase/ribonuclease H (RT) is a multifunctional enzyme that catalyzes the conversion of the retro-elements RNA genome into dsDNA within the VLP. The enzyme displays a DNA polymerase activity that can copy either DNA or RNA templates, and a ribonuclease H (RNase H) activity that cleaves the RNA strand of RNA-DNA heteroduplexes during plus-strand synthesis and hydrolyzes RNA primers. The conversion leads to a linear dsDNA copy of the retrotransposon that includes long terminal repeats (LTRs) at both ends. Integrase (IN) targets the VLP to the nucleus, where a subparticle preintegration complex (PIC) containing at least integrase and the newly synthesized dsDNA copy of the retrotransposon must transit the nuclear membrane. Once in the nucleus, integrase performs the integration of the dsDNA into the host genome. This chain is Transposon Ty1-PR1 Gag-Pol polyprotein (TY1B-PR1), found in Saccharomyces cerevisiae (strain ATCC 204508 / S288c) (Baker's yeast).